A 1036-amino-acid polypeptide reads, in one-letter code: DNA-directed RNA polymerase subunit beta (1036 aa).

The protein belongs to the RNA polymerase beta chain family. In terms of assembly, in plastids the minimal PEP RNA polymerase catalytic core is composed of four subunits: alpha, beta, beta', and beta''. When a (nuclear-encoded) sigma factor is associated with the core the holoenzyme is formed, which can initiate transcription.

It localises to the plastid. Its subcellular location is the chloroplast. The enzyme catalyses RNA(n) + a ribonucleoside 5'-triphosphate = RNA(n+1) + diphosphate. Its function is as follows. DNA-dependent RNA polymerase catalyzes the transcription of DNA into RNA using the four ribonucleoside triphosphates as substrates. The protein is DNA-directed RNA polymerase subunit beta of Cyanidioschyzon merolae (strain NIES-3377 / 10D) (Unicellular red alga).